The chain runs to 228 residues: 2-hydroxy-3-keto-5-methylthiopentenyl-1-phosphate phosphatase (228 aa).

Belongs to the HAD-like hydrolase superfamily. MtnX family.

The catalysed reaction is 2-hydroxy-5-methylsulfanyl-3-oxopent-1-enyl phosphate + H2O = 1,2-dihydroxy-5-(methylsulfanyl)pent-1-en-3-one + phosphate. It participates in amino-acid biosynthesis; L-methionine biosynthesis via salvage pathway; L-methionine from S-methyl-5-thio-alpha-D-ribose 1-phosphate: step 4/6. Functionally, dephosphorylates 2-hydroxy-3-keto-5-methylthiopentenyl-1-phosphate (HK-MTPenyl-1-P) yielding 1,2-dihydroxy-3-keto-5-methylthiopentene (DHK-MTPene). This Lysinibacillus sphaericus (strain C3-41) protein is 2-hydroxy-3-keto-5-methylthiopentenyl-1-phosphate phosphatase.